We begin with the raw amino-acid sequence, 148 residues long: 3-dehydroquinate dehydratase (148 aa).

The active-site Proton acceptor is the Y23. 3 residues coordinate substrate: N75, H81, and D88. H101 (proton donor) is an active-site residue. Residues 102-103 (MS) and R112 contribute to the substrate site.

The protein belongs to the type-II 3-dehydroquinase family. In terms of assembly, homododecamer.

It catalyses the reaction 3-dehydroquinate = 3-dehydroshikimate + H2O. It functions in the pathway metabolic intermediate biosynthesis; chorismate biosynthesis; chorismate from D-erythrose 4-phosphate and phosphoenolpyruvate: step 3/7. Functionally, catalyzes a trans-dehydration via an enolate intermediate. This chain is 3-dehydroquinate dehydratase, found in Syntrophotalea carbinolica (strain DSM 2380 / NBRC 103641 / GraBd1) (Pelobacter carbinolicus).